A 346-amino-acid polypeptide reads, in one-letter code: Anthranilate phosphoribosyltransferase (346 aa).

5-phospho-alpha-D-ribose 1-diphosphate is bound by residues glycine 88, 91–92, threonine 96, 98–101, 116–124, and alanine 128; these read GD, NIST, and KHGNRAVSS. Glycine 88 serves as a coordination point for anthranilate. Position 100 (serine 100) interacts with Mg(2+). Asparagine 119 is a binding site for anthranilate. Residue arginine 174 participates in anthranilate binding. Mg(2+) is bound by residues aspartate 233 and glutamate 234.

It belongs to the anthranilate phosphoribosyltransferase family. In terms of assembly, homodimer. It depends on Mg(2+) as a cofactor.

It catalyses the reaction N-(5-phospho-beta-D-ribosyl)anthranilate + diphosphate = 5-phospho-alpha-D-ribose 1-diphosphate + anthranilate. The protein operates within amino-acid biosynthesis; L-tryptophan biosynthesis; L-tryptophan from chorismate: step 2/5. Catalyzes the transfer of the phosphoribosyl group of 5-phosphorylribose-1-pyrophosphate (PRPP) to anthranilate to yield N-(5'-phosphoribosyl)-anthranilate (PRA). In Paramagnetospirillum magneticum (strain ATCC 700264 / AMB-1) (Magnetospirillum magneticum), this protein is Anthranilate phosphoribosyltransferase.